We begin with the raw amino-acid sequence, 225 residues long: NAD(P)H-quinone oxidoreductase subunit K, chloroplastic (225 aa).

Residues Cys43, Cys44, Cys108, and Cys139 each contribute to the [4Fe-4S] cluster site.

This sequence belongs to the complex I 20 kDa subunit family. In terms of assembly, NDH is composed of at least 16 different subunits, 5 of which are encoded in the nucleus. Requires [4Fe-4S] cluster as cofactor.

The protein localises to the plastid. It localises to the chloroplast thylakoid membrane. The enzyme catalyses a plastoquinone + NADH + (n+1) H(+)(in) = a plastoquinol + NAD(+) + n H(+)(out). It carries out the reaction a plastoquinone + NADPH + (n+1) H(+)(in) = a plastoquinol + NADP(+) + n H(+)(out). Functionally, NDH shuttles electrons from NAD(P)H:plastoquinone, via FMN and iron-sulfur (Fe-S) centers, to quinones in the photosynthetic chain and possibly in a chloroplast respiratory chain. The immediate electron acceptor for the enzyme in this species is believed to be plastoquinone. Couples the redox reaction to proton translocation, and thus conserves the redox energy in a proton gradient. The protein is NAD(P)H-quinone oxidoreductase subunit K, chloroplastic of Brachypodium distachyon (Purple false brome).